The primary structure comprises 223 residues: Cytotoxic T-lymphocyte protein 4 (223 aa).

The signal sequence occupies residues 1 to 35 (MACLGLRRYKAQLQLPSRTWPFVALLTLLFIPVFS). The Ig-like V-type domain occupies 36-145 (EAIQVTQPSV…PPPYFVGMGN (110 aa)). Residues 36 to 161 (EAIQVTQPSV…IDPEPCPDSD (126 aa)) lie on the Extracellular side of the membrane. The homodimerization stretch occupies residues 46–50 (VLASS). 2 cysteine pairs are disulfide-bonded: Cys-58–Cys-129 and Cys-85–Cys-103. N-linked (GlcNAc...) asparagine glycans are attached at residues Asn-108 and Asn-113. The important for interaction with CD80 and CD86 stretch occupies residues 134–139 (MYPPPY). A glycan (N-linked (GlcNAc...) asparagine) is linked at Asn-145. The segment at 150–155 (YVIDPE) is homodimerization. A helical membrane pass occupies residues 162-182 (FLLWILVAVSLGLFFYSFLVS). Residues 183–223 (AVSLSKMLKKRSPLTTGVYVKMPPTEPECEKQFQPYFIPIN) lie on the Cytoplasmic side of the membrane. Tyr-201 is modified (phosphotyrosine; by TXK and JAK2).

As to quaternary structure, homodimer; disulfide-linked. Binds to CD80/B7-1 and CD86/B7.2. Interacts with ICOSLG. In terms of processing, N-glycosylation is important for dimerization. Phosphorylation at Tyr-201 prevents binding to the AP-2 adapter complex, blocks endocytosis, and leads to retention of CTLA4 on the cell surface. Widely expressed with highest levels in lymphoid tissues.

The protein resides in the cell membrane. In terms of biological role, inhibitory receptor acting as a major negative regulator of T-cell responses. The affinity of CTLA4 for its natural B7 family ligands, CD80 and CD86, is considerably stronger than the affinity of their cognate stimulatory coreceptor CD28. The protein is Cytotoxic T-lymphocyte protein 4 (Ctla4) of Mus musculus (Mouse).